A 313-amino-acid chain; its full sequence is Ester hydrolase C11orf54 homolog (313 aa).

Residues H264, H266, and H276 each contribute to the Zn(2+) site.

As to quaternary structure, monomer. Zn(2+) is required as a cofactor.

Its subcellular location is the nucleus. The protein resides in the cytoplasm. In terms of biological role, exhibits ester hydrolase activity on the substrate p-nitrophenyl acetate, in vitro. May regulate DNA damage and repair by regulating HIF1A degradation via chaperone-mediated autophagy (CMA). The sequence is that of Ester hydrolase C11orf54 homolog from Xenopus tropicalis (Western clawed frog).